The following is a 94-amino-acid chain: Large ribosomal subunit protein bL25 (94 aa).

Belongs to the bacterial ribosomal protein bL25 family. As to quaternary structure, part of the 50S ribosomal subunit; part of the 5S rRNA/L5/L18/L25 subcomplex. Contacts the 5S rRNA. Binds to the 5S rRNA independently of L5 and L18.

Its function is as follows. This is one of the proteins that binds to the 5S RNA in the ribosome where it forms part of the central protuberance. In Cronobacter sakazakii (strain ATCC BAA-894) (Enterobacter sakazakii), this protein is Large ribosomal subunit protein bL25.